The sequence spans 356 residues: Protein trichome birefringence-like 41 (356 aa).

A helical; Signal-anchor for type II membrane protein membrane pass occupies residues 12–31 (SALVLSLLLLLLLPLLHEAA). The GDS motif signature appears at 107-109 (GDS). The DCXHWCLPGXXDXWN motif motif lies at 333 to 347 (DCSHWCLSGVPDTWN).

Belongs to the PC-esterase family. TBL subfamily.

It is found in the membrane. Functionally, may act as a bridging protein that binds pectin and other cell wall polysaccharides. Probably involved in maintaining esterification of pectins. May be involved in the specific O-acetylation of cell wall polymers. The polypeptide is Protein trichome birefringence-like 41 (TBL41) (Arabidopsis thaliana (Mouse-ear cress)).